Consider the following 271-residue polypeptide: MHAASRESMTELATTLDNTVAQSNAAVDGAQIGPELFDVVEVLDSNRDLRVALIDPAASSEKRADLADRVFGEKLNQASRSVLRSAVDKDWSNTRDFRNGLVQLGRRALFRAAEADDKLTTVESELFQLARVLEDAPQLEMLLADRQASADRRRQLLASVLYGKVTSITETLALQAISRAKQRPVEACETLSREAAQLRGYEVAHVVTAGELSDTQRSTLADKLGRIYGHKMSIHGEVDPSILGGMVIRVGDERIDGSTSGKLEKLRRAFA.

The protein belongs to the ATPase delta chain family. F-type ATPases have 2 components, F(1) - the catalytic core - and F(0) - the membrane proton channel. F(1) has five subunits: alpha(3), beta(3), gamma(1), delta(1), epsilon(1). F(0) has three main subunits: a(1), b(2) and c(10-14). The alpha and beta chains form an alternating ring which encloses part of the gamma chain. F(1) is attached to F(0) by a central stalk formed by the gamma and epsilon chains, while a peripheral stalk is formed by the delta and b chains.

Its subcellular location is the cell membrane. In terms of biological role, f(1)F(0) ATP synthase produces ATP from ADP in the presence of a proton or sodium gradient. F-type ATPases consist of two structural domains, F(1) containing the extramembraneous catalytic core and F(0) containing the membrane proton channel, linked together by a central stalk and a peripheral stalk. During catalysis, ATP synthesis in the catalytic domain of F(1) is coupled via a rotary mechanism of the central stalk subunits to proton translocation. This protein is part of the stalk that links CF(0) to CF(1). It either transmits conformational changes from CF(0) to CF(1) or is implicated in proton conduction. The polypeptide is ATP synthase subunit delta (Corynebacterium kroppenstedtii (strain DSM 44385 / JCM 11950 / CIP 105744 / CCUG 35717)).